The primary structure comprises 326 residues: Pantothenate kinase (326 aa).

104–111 (GSVAVGKS) contacts ATP.

This sequence belongs to the prokaryotic pantothenate kinase family.

The protein localises to the cytoplasm. The enzyme catalyses (R)-pantothenate + ATP = (R)-4'-phosphopantothenate + ADP + H(+). It participates in cofactor biosynthesis; coenzyme A biosynthesis; CoA from (R)-pantothenate: step 1/5. The chain is Pantothenate kinase from Parvibaculum lavamentivorans (strain DS-1 / DSM 13023 / NCIMB 13966).